Consider the following 274-residue polypeptide: Diaminopimelate epimerase (274 aa).

Substrate is bound by residues asparagine 11, glutamine 44, and asparagine 64. The Proton donor role is filled by cysteine 73. Residues glycine 74–asparagine 75, asparagine 157, asparagine 190, and glutamate 208–arginine 209 contribute to the substrate site. Catalysis depends on cysteine 217, which acts as the Proton acceptor. Position 218-219 (glycine 218–serine 219) interacts with substrate.

Belongs to the diaminopimelate epimerase family. Homodimer.

Its subcellular location is the cytoplasm. It carries out the reaction (2S,6S)-2,6-diaminopimelate = meso-2,6-diaminopimelate. Its pathway is amino-acid biosynthesis; L-lysine biosynthesis via DAP pathway; DL-2,6-diaminopimelate from LL-2,6-diaminopimelate: step 1/1. Its function is as follows. Catalyzes the stereoinversion of LL-2,6-diaminopimelate (L,L-DAP) to meso-diaminopimelate (meso-DAP), a precursor of L-lysine and an essential component of the bacterial peptidoglycan. The sequence is that of Diaminopimelate epimerase from Pectobacterium carotovorum subsp. carotovorum (strain PC1).